Consider the following 237-residue polypeptide: dTDP-3-amino-3,4,6-trideoxy-alpha-D-glucopyranose N,N-dimethyltransferase (237 aa).

Substrate contacts are provided by Tyr14 and Arg17. Residues Tyr21, Ala46, Glu67, 89–90, and Met105 each bind S-adenosyl-L-methionine; that span reads DM. Residues 145-147, Ser152, 165-169, and Arg229 contribute to the substrate site; these read TFA and RVSHS.

Belongs to the methyltransferase TylM1/DesVI family. In terms of assembly, homodimer.

It carries out the reaction dTDP-3-amino-3,4,6-trideoxy-alpha-D-glucose + 2 S-adenosyl-L-methionine = dTDP-alpha-D-desosamine + 2 S-adenosyl-L-homocysteine + 2 H(+). It participates in antibiotic biosynthesis. In terms of biological role, S-adenosyl-L-methionine-dependent methyltransferase involved in the biosynthesis of desosamine, found in certain macrolide antibiotics such as erthyromycin, azithromycin, clarithromycin, and methymycin. Catalyzes the last step in the biosynthesis of dTDP-desosamine, i.e. the N,N-dimethylation of the 3-amino group of dTDP-3-amino-3,4,6-trideoxy-alpha-D-glucose. This chain is dTDP-3-amino-3,4,6-trideoxy-alpha-D-glucopyranose N,N-dimethyltransferase, found in Streptomyces venezuelae.